Consider the following 102-residue polypeptide: Large ribosomal subunit protein bL21 (102 aa).

The protein belongs to the bacterial ribosomal protein bL21 family. In terms of assembly, part of the 50S ribosomal subunit. Contacts protein L20.

Its function is as follows. This protein binds to 23S rRNA in the presence of protein L20. The protein is Large ribosomal subunit protein bL21 of Arthrobacter sp. (strain FB24).